A 284-amino-acid polypeptide reads, in one-letter code: RCS-specific HTH-type transcriptional activator RclR (284 aa).

An intrachain disulfide couples cysteine 21 to cysteine 89. The HTH araC/xylS-type domain maps to 177 to 278 (PRLGAVIQQM…GCTPGEYRER (102 aa)). 2 DNA-binding regions (H-T-H motif) span residues 197 to 218 (ESLA…RDVS) and 245 to 268 (VVVI…VREF).

Oxydation of Cys-21 leads to partial activation of RclR, followed by the formation of an intramolecular disulfide bond between Cys-21 and Cys-89, which stabilizes the active form of RclR. Its function is as follows. Involved in reactive chlorine species (RCS) stress resistance. Up-regulates, in response to hypochlorous acid (HOCl), the expression of three genes essential for survival of RCS stress (rclA, rclB and rclC) and its own expression. The chain is RCS-specific HTH-type transcriptional activator RclR (rclR) from Escherichia coli (strain K12).